Consider the following 489-residue polypeptide: ERO1-like protein alpha (489 aa).

Positions 1-20 (METCVLLLGLFLTSVHVTTA) are cleaved as a signal peptide. 8 cysteine pairs are disulfide-bonded: C27/C40, C29/C38, C77/C382, C86/C91, C86/C123, C91/C96, C200/C232, and C385/C388. The FAD site is built by R179, T181, and W192. The FAD site is built by S243 and H246. An N-linked (GlcNAc...) asparagine glycan is attached at N271. 2 residues coordinate FAD: R278 and R291. The N-linked (GlcNAc...) asparagine glycan is linked to N375.

Belongs to the EROs family. In terms of assembly, predominantly monomer. May function both as a monomer and a homodimer. FAD is required as a cofactor. The Cys-86/Cys-91 and Cys-385/Cys-388 disulfide bonds constitute the redox-active center. The Cys-86/Cys-91 disulfide bond may accept electron from protein disulfide isomerase (PDI) and funnel them to the active site disulfide Cys-385/Cys-388.

Its subcellular location is the endoplasmic reticulum membrane. Its activity is regulated as follows. Enzyme activity is tightly regulated to prevent the accumulation of reactive oxygen species in the endoplasmic reticulum. Reversibly down-regulated by the formation of disulfide bonds between the active site Cys-86 and Cys-123, and between Cys-91 and Cys-96. Glutathione may be required to regulate its activity in the endoplasmic reticulum. Its function is as follows. Oxidoreductase involved in disulfide bond formation in the endoplasmic reticulum. Efficiently reoxidizes P4HB/PDI, the enzyme catalyzing protein disulfide formation, in order to allow P4HB to sustain additional rounds of disulfide formation. Following P4HB reoxidation, passes its electrons to molecular oxygen via FAD, leading to the production of reactive oxygen species (ROS) in the cell. Required for the folding of immunoglobulins. The chain is ERO1-like protein alpha from Danio rerio (Zebrafish).